Here is a 229-residue protein sequence, read N- to C-terminus: Interleukin-27 subunit beta (229 aa).

Residues 1–20 form the signal peptide; it reads MTPQLLLALVLWASCPPCSG. Fibronectin type-III domains follow at residues 24–130 and 131–227; these read PPAA…IKPD and PPEG…TMSL. N-linked (GlcNAc...) asparagine glycans are attached at residues N55 and N105.

This sequence belongs to the type I cytokine receptor family. Type 3 subfamily. Heterodimer with IL27/IL27A; not disulfide-linked. This heterodimer is known as interleukin IL-27. Heterodimer with IL12A; not disulfide-linked. This heterodimer is known as interleukin IL-35. Interacts with SQSTM1.

Its subcellular location is the secreted. Its function is as follows. Associates with IL27 to form the IL-27 interleukin, a heterodimeric cytokine which functions in innate immunity. IL-27 has pro- and anti-inflammatory properties, that can regulate T-helper cell development, suppress T-cell proliferation, stimulate cytotoxic T-cell activity, induce isotype switching in B-cells, and that has diverse effects on innate immune cells. Among its target cells are CD4 T-helper cells which can differentiate in type 1 effector cells (TH1), type 2 effector cells (TH2) and IL17 producing helper T-cells (TH17). It drives rapid clonal expansion of naive but not memory CD4 T-cells. It also strongly synergizes with IL-12 to trigger interferon-gamma/IFN-gamma production of naive CD4 T-cells, binds to the cytokine receptor WSX-1/TCCR. Another important role of IL-27 is its antitumor activity as well as its antiangiogenic activity with activation of production of antiangiogenic chemokines. This Homo sapiens (Human) protein is Interleukin-27 subunit beta (EBI3).